The sequence spans 389 residues: tRNA-specific 2-thiouridylase MnmA (389 aa).

ATP-binding positions include 35–42 (GMSGGVDS) and Met61. The interaction with target base in tRNA stretch occupies residues 121–123 (NPD). Cys126 acts as the Nucleophile in catalysis. A disulfide bond links Cys126 and Cys223. An ATP-binding site is contributed by Gly151. The tract at residues 173 to 175 (KDQ) is interaction with tRNA. Cys223 (cysteine persulfide intermediate) is an active-site residue. An interaction with tRNA region spans residues 335–336 (RY).

The protein belongs to the MnmA/TRMU family.

It localises to the cytoplasm. The enzyme catalyses S-sulfanyl-L-cysteinyl-[protein] + uridine(34) in tRNA + AH2 + ATP = 2-thiouridine(34) in tRNA + L-cysteinyl-[protein] + A + AMP + diphosphate + H(+). Functionally, catalyzes the 2-thiolation of uridine at the wobble position (U34) of tRNA, leading to the formation of s(2)U34. In Mannheimia succiniciproducens (strain KCTC 0769BP / MBEL55E), this protein is tRNA-specific 2-thiouridylase MnmA.